The following is a 125-amino-acid chain: MADLAKIVDDLSSLTVLEAAELSKLLEEKWGVSAAAPVAVAAAAGGAAAAVVEEEKTEFDVILVEAGANKINVIKEVRAITGLGLKEAKDLVEAAPKAVKEGVNKAEAADIKKKLEDAGAKADVK.

It belongs to the bacterial ribosomal protein bL12 family. As to quaternary structure, homodimer. Part of the ribosomal stalk of the 50S ribosomal subunit. Forms a multimeric L10(L12)X complex, where L10 forms an elongated spine to which 2 to 4 L12 dimers bind in a sequential fashion. Binds GTP-bound translation factors.

Its function is as follows. Forms part of the ribosomal stalk which helps the ribosome interact with GTP-bound translation factors. Is thus essential for accurate translation. The chain is Large ribosomal subunit protein bL12 from Rhizobium johnstonii (strain DSM 114642 / LMG 32736 / 3841) (Rhizobium leguminosarum bv. viciae).